Consider the following 142-residue polypeptide: MKTFSAKAHEVTREWYVIDATDKVLGRVASEVARRLRGKHKPEFTPHVDTGDFIIIINASKLKVTGNKTLDKKYYRHSGYPGGIYETTFGKMQERFPGRALEKAVKGMLPKGPLGYAMIKKLKVYAEATHPHSAQQPKALEI.

It belongs to the universal ribosomal protein uL13 family. Part of the 50S ribosomal subunit.

This protein is one of the early assembly proteins of the 50S ribosomal subunit, although it is not seen to bind rRNA by itself. It is important during the early stages of 50S assembly. The sequence is that of Large ribosomal subunit protein uL13 from Burkholderia cenocepacia (strain ATCC BAA-245 / DSM 16553 / LMG 16656 / NCTC 13227 / J2315 / CF5610) (Burkholderia cepacia (strain J2315)).